The primary structure comprises 352 residues: MKKVCIVGASGFTGGELLRILLQHRGVEIVCATSRRFKGEYVYRVHPNLRGFTQLKFVEPSIDVALKADVVFLALPHGESVKWVPKLYESGVAVFDLSADFRLKDPNAYVEWYKWPQPHPYPDLLQKAVYGQPELHRDELVGAKLVAVPGCMATASILMLAPLAKFGLLSDTPPVVDAKIGSSGAGAEGSVVDLHSFRTYVVRPYEPVHHRHIAEIEQELTRLAGRKVRIAFTPHAVDIVRGIFTTGHVYVEKLPSETDMWRYYRALYGDSKFIRIVKDRLGISRYPNVKYVLGTNIVDLGFELDPRLNRVVTFAAIDNLVRGAAGQAVQAFNIAMGFPEDEGLRQIPIAPL.

NADP(+)-binding positions include 10–13 and 34–36; these read SGFT and SRR. Cys-151 is a catalytic residue. NADP(+) is bound at residue Asn-319.

This sequence belongs to the NAGSA dehydrogenase family. Type 1 subfamily. LysY sub-subfamily.

The protein localises to the cytoplasm. It catalyses the reaction [amino-group carrier protein]-C-terminal-N-(1-carboxy-5-oxopentan-1-yl)-L-glutamine + phosphate + NADP(+) = [amino-group carrier protein]-C-terminal-N-(1-carboxy-5-phosphooxy-5-oxopentan-1-yl)-L-glutamine + NADPH + H(+). The enzyme catalyses [amino-group carrier protein]-C-terminal-gamma-(L-glutamyl-5-semialdehyde)-L-glutamate + phosphate + NADP(+) = [amino-group carrier protein]-C-terminal-gamma-(5-phospho-L-glutamyl)-L-glutamate + NADPH + H(+). It participates in amino-acid biosynthesis; L-lysine biosynthesis via AAA pathway; L-lysine from L-alpha-aminoadipate (Thermus route): step 3/5. Its pathway is amino-acid biosynthesis; L-arginine biosynthesis. In terms of biological role, involved in both the arginine and lysine biosynthetic pathways. The chain is Putative [LysW]-L-2-aminoadipate/[LysW]-L-glutamate phosphate reductase from Pyrobaculum islandicum (strain DSM 4184 / JCM 9189 / GEO3).